The sequence spans 340 residues: Extracellular matrix protein-binding protein emp (340 aa).

The signal sequence occupies residues 1 to 26; sequence MKKKLLVLTMSTLFATQLINSNHAKA.

It is found in the cell surface. Functionally, adhesin that binds to the host cell extracellular matrix proteins fibronectin, fibrinogen, collagen, and vitronectin. The protein is Extracellular matrix protein-binding protein emp (emp) of Staphylococcus aureus (strain Mu50 / ATCC 700699).